A 490-amino-acid polypeptide reads, in one-letter code: Limb region 1 protein (490 aa).

Topologically, residues 1–19 (MEGQDEVSAREQHFHSQVR) are extracellular. The chain crosses the membrane as a helical span at residues 20–40 (ESTICFLLFAILYIVSYFIII). Residues 41 to 62 (RYKRKSDEQEDEDAVVNRISLF) are Cytoplasmic-facing. A helical transmembrane segment spans residues 63–83 (LSTFTLAVSAGAVLLLPFSII). Residues 84-110 (SNEILLAFPHNYYIQWLNGSLIHGLWN) are Extracellular-facing. A helical membrane pass occupies residues 111–131 (LASLFSNLCLFVLMPFAFFFL). Residues 132–151 (ESEGFAGLKKGIRARILETL) lie on the Cytoplasmic side of the membrane. Residues 152 to 172 (VMLLLLALLILGMVWVASALI) form a helical membrane-spanning segment. The Extracellular portion of the chain corresponds to 173–187 (DSDAASMESLYDLWE). Residues 188-208 (FYLPYLYSCISLMGCLLLLLC) form a helical membrane-spanning segment. Over 209–291 (TPVGLSRMFT…RKKASAWERN (83 aa)) the chain is Cytoplasmic. Positions 256 to 287 (SSVEYNVMELEQELENVKILKTKLERRKKASA) form a coiled coil. Residues 292 to 312 (LVYPAVMVLLLIETSISVLLV) traverse the membrane as a helical segment. Over 313-339 (ACNILCLLVDETAMPKGTRGPGIGSAS) the chain is Extracellular. Residues 340 to 360 (LSTFGFVGAALEIILIFYLMV) form a helical membrane-spanning segment. Over 361–383 (SSVVGFYSLRFFGNFTPKKDDTT) the chain is Cytoplasmic. Residues 384-404 (MTKIIGNCVSILVLSSALPVM) form a helical membrane-spanning segment. Residues 405-426 (SRTLGITRFDLLGDFGRFNWLG) lie on the Extracellular side of the membrane. Residues 427–447 (NFYIVLSYNLLFAIMTTLCLI) form a helical membrane-spanning segment. Residues 448 to 490 (RKFTSAVREELFKALGLHKLHLSDTSRDSETTKPSANGHQKAL) are Cytoplasmic-facing.

Belongs to the LIMR family.

It is found in the membrane. Functionally, putative membrane receptor. The polypeptide is Limb region 1 protein (Lmbr1) (Mus musculus (Mouse)).